The primary structure comprises 738 residues: 1,4-alpha-glucan branching enzyme GlgB (738 aa).

D399 (nucleophile) is an active-site residue. E452 serves as the catalytic Proton donor.

It belongs to the glycosyl hydrolase 13 family. GlgB subfamily. In terms of assembly, monomer.

It catalyses the reaction Transfers a segment of a (1-&gt;4)-alpha-D-glucan chain to a primary hydroxy group in a similar glucan chain.. Its pathway is glycan biosynthesis; glycogen biosynthesis. Catalyzes the formation of the alpha-1,6-glucosidic linkages in glycogen by scission of a 1,4-alpha-linked oligosaccharide from growing alpha-1,4-glucan chains and the subsequent attachment of the oligosaccharide to the alpha-1,6 position. The protein is 1,4-alpha-glucan branching enzyme GlgB of Chlamydia trachomatis serovar A (strain ATCC VR-571B / DSM 19440 / HAR-13).